The chain runs to 285 residues: MSAMDLSSLQTVIDTAFDNRDTITLSTKGEVRDAVEQSLALLDQGKVRVATRGEDGQWTVHQWLKKAVLLSFRLNDMEVVKGGPGASTWWDKVPSKFEGWGENQFRAAGFRAVPNAVVRHSAFIAPNAILMPSFVNLGAYVGEGTMVDTWATVGSCAQIGRHVHLSGGVGIGGVLEPMQAGPTIIEDNCFIGARSEVVEGCIIREGAVLGMGVYIGKSTKIIDRATGEVMYGEVPPYSVVVAGSMPSPNTMPNGLPAPSLYCAVIVKRVDAQTRSKTGINELLRD.

Substrate-binding residues include R111 and D148.

The protein belongs to the transferase hexapeptide repeat family. In terms of assembly, homotrimer.

It is found in the cytoplasm. The catalysed reaction is (S)-2,3,4,5-tetrahydrodipicolinate + succinyl-CoA + H2O = (S)-2-succinylamino-6-oxoheptanedioate + CoA. It functions in the pathway amino-acid biosynthesis; L-lysine biosynthesis via DAP pathway; LL-2,6-diaminopimelate from (S)-tetrahydrodipicolinate (succinylase route): step 1/3. The protein is 2,3,4,5-tetrahydropyridine-2,6-dicarboxylate N-succinyltransferase of Allorhizobium ampelinum (strain ATCC BAA-846 / DSM 112012 / S4) (Agrobacterium vitis (strain S4)).